The primary structure comprises 159 residues: Ribosomal RNA large subunit methyltransferase H (159 aa).

S-adenosyl-L-methionine-binding positions include Leu76, Gly108, and 127 to 132; that span reads FSKMTF.

Belongs to the RNA methyltransferase RlmH family. Homodimer.

The protein localises to the cytoplasm. It carries out the reaction pseudouridine(1915) in 23S rRNA + S-adenosyl-L-methionine = N(3)-methylpseudouridine(1915) in 23S rRNA + S-adenosyl-L-homocysteine + H(+). Functionally, specifically methylates the pseudouridine at position 1915 (m3Psi1915) in 23S rRNA. The protein is Ribosomal RNA large subunit methyltransferase H of Lachnospira eligens (strain ATCC 27750 / DSM 3376 / VPI C15-48 / C15-B4) (Eubacterium eligens).